The primary structure comprises 259 residues: Proliferating cell nuclear antigen (259 aa).

The DNA-binding element occupies 61–80 (RCDRNIALGVNLTSLTKVLR). Lysine 164 is covalently cross-linked (Glycyl lysine isopeptide (Lys-Gly) (interchain with G-Cter in SUMO); alternate). Residue lysine 164 forms a Glycyl lysine isopeptide (Lys-Gly) (interchain with G-Cter in ubiquitin); alternate linkage.

It belongs to the PCNA family. As to quaternary structure, homotrimer. Post-translationally, monoubiquitinated on Lys-164 upon DNA damage, and then polyubiquitinated through 'Lys-63'-linkage.

It is found in the nucleus. This protein is an auxiliary protein of DNA polymerase delta and is involved in the control of eukaryotic DNA replication by increasing the polymerase's processibility during elongation of the leading strand. Involved in DNA repair. This chain is Proliferating cell nuclear antigen, found in Chaetomium thermophilum (strain DSM 1495 / CBS 144.50 / IMI 039719) (Thermochaetoides thermophila).